Here is a 303-residue protein sequence, read N- to C-terminus: Signal recognition particle receptor FtsY (303 aa).

Residues 108 to 115 (GVNGAGKT), 190 to 194 (DTAGR), and 254 to 257 (TKLD) each bind GTP.

Belongs to the GTP-binding SRP family. FtsY subfamily. In terms of assembly, part of the signal recognition particle protein translocation system, which is composed of SRP and FtsY. SRP is a ribonucleoprotein composed of Ffh and a 4.5S RNA molecule.

It localises to the cell inner membrane. It is found in the cytoplasm. It carries out the reaction GTP + H2O = GDP + phosphate + H(+). Its function is as follows. Involved in targeting and insertion of nascent membrane proteins into the cytoplasmic membrane. Acts as a receptor for the complex formed by the signal recognition particle (SRP) and the ribosome-nascent chain (RNC). Interaction with SRP-RNC leads to the transfer of the RNC complex to the Sec translocase for insertion into the membrane, the hydrolysis of GTP by both Ffh and FtsY, and the dissociation of the SRP-FtsY complex into the individual components. The polypeptide is Signal recognition particle receptor FtsY (Rickettsia felis (strain ATCC VR-1525 / URRWXCal2) (Rickettsia azadi)).